We begin with the raw amino-acid sequence, 190 residues long: Small ribosomal subunit protein uS4 (190 aa).

One can recognise an S4 RNA-binding domain in the interval 105–181 (RRLQTLVYKL…RKKAKAAEGG (77 aa)). Residues 163–190 (GGGRPGRVRRKKAKAAEGGDGDAEEDEE) form a disordered region. The span at 181–190 (GDGDAEEDEE) shows a compositional bias: acidic residues.

The protein belongs to the universal ribosomal protein uS4 family.

This chain is Small ribosomal subunit protein uS4 (RPS9), found in Podospora anserina (Pleurage anserina).